The primary structure comprises 361 residues: Biotin synthase (361 aa).

The tract at residues 14-38 is disordered; that stretch reads AQRTPEPLPPTSQGLARPSHDVVRG. One can recognise a Radical SAM core domain in the interval 86–315; sequence HKGGPAALCG…ARDILVCGGR (230 aa). Cys104, Cys108, and Cys111 together coordinate [4Fe-4S] cluster. [2Fe-2S] cluster is bound by residues Cys180 and Cys240.

Belongs to the radical SAM superfamily. Biotin synthase family. Homodimer. The cofactor is [4Fe-4S] cluster. Requires [2Fe-2S] cluster as cofactor.

The catalysed reaction is (4R,5S)-dethiobiotin + (sulfur carrier)-SH + 2 reduced [2Fe-2S]-[ferredoxin] + 2 S-adenosyl-L-methionine = (sulfur carrier)-H + biotin + 2 5'-deoxyadenosine + 2 L-methionine + 2 oxidized [2Fe-2S]-[ferredoxin]. The protein operates within cofactor biosynthesis; biotin biosynthesis; biotin from 7,8-diaminononanoate: step 2/2. In terms of biological role, catalyzes the conversion of dethiobiotin (DTB) to biotin by the insertion of a sulfur atom into dethiobiotin via a radical-based mechanism. This chain is Biotin synthase, found in Nitratidesulfovibrio vulgaris (strain DP4) (Desulfovibrio vulgaris).